A 461-amino-acid chain; its full sequence is Transcription factor GTE3, chloroplastic (461 aa).

Residues 1–11 (MASGPIAGGGV) are compositionally biased toward gly residues. Residues 1–41 (MASGPIAGGGVSKTKHKWSDSGNKSQKRSKPTVANSNSLGL) form a disordered region. The transit peptide at 1–51 (MASGPIAGGGVSKTKHKWSDSGNKSQKRSKPTVANSNSLGLEDNHQMMKIS) directs the protein to the chloroplast. The Bromo domain maps to 114–220 (KGTVQILKSC…NLFEEKWVPL (107 aa)). The NET domain occupies 298-379 (LVEEASANRD…EYKESLSKKK (82 aa)). Over residues 376 to 392 (SKKKEEQGLDSERDAES) the composition is skewed to basic and acidic residues. The tract at residues 376–461 (SKKKEEQGLD…SSGHESDTGN (86 aa)) is disordered. Residues 393 to 412 (FHNSVHESNTLVTGLESSKV) are compositionally biased toward polar residues. A compositionally biased stretch (low complexity) spans 429–451 (GGSSSSNSSSSGSGSGSSGSDSD). Residues 452–461 (SSGHESDTGN) are compositionally biased toward basic and acidic residues.

Interacts with SIZ1 (via PHD domain). Sumoylated by SIZ1. Sumoylation reduces capacity to bind to acetylated histone H3.

It localises to the plastid. Its subcellular location is the chloroplast. Its function is as follows. Probable transcription factor that binds to acetylated histone H3. This Arabidopsis thaliana (Mouse-ear cress) protein is Transcription factor GTE3, chloroplastic (GTE3).